Reading from the N-terminus, the 333-residue chain is Beta-ketoacyl-[acyl-carrier-protein] synthase III (333 aa).

Active-site residues include cysteine 117 and histidine 257. Residues 258–262 (QANLR) form an ACP-binding region. The active site involves asparagine 287.

The protein belongs to the thiolase-like superfamily. FabH family. As to quaternary structure, homodimer.

It is found in the cytoplasm. The catalysed reaction is malonyl-[ACP] + acetyl-CoA + H(+) = 3-oxobutanoyl-[ACP] + CO2 + CoA. It participates in lipid metabolism; fatty acid biosynthesis. In terms of biological role, catalyzes the condensation reaction of fatty acid synthesis by the addition to an acyl acceptor of two carbons from malonyl-ACP. Catalyzes the first condensation reaction which initiates fatty acid synthesis and may therefore play a role in governing the total rate of fatty acid production. Possesses both acetoacetyl-ACP synthase and acetyl transacylase activities. Its substrate specificity determines the biosynthesis of branched-chain and/or straight-chain of fatty acids. This chain is Beta-ketoacyl-[acyl-carrier-protein] synthase III, found in Azobacteroides pseudotrichonymphae genomovar. CFP2.